The following is a 291-amino-acid chain: E3 ubiquitin-protein ligase RZFP34 (291 aa).

The CHY-type zinc-finger motif lies at 20–96 (IGSGHYGCSH…VQQNCSNCGV (77 aa)). Residues cysteine 27, histidine 29, cysteine 40, cysteine 41, cysteine 47, cysteine 50, histidine 51, histidine 66, cysteine 78, cysteine 81, cysteine 91, cysteine 94, cysteine 103, cysteine 106, histidine 119, cysteine 120, cysteine 123, cysteine 126, histidine 136, cysteine 137, cysteine 140, cysteine 143, histidine 152, and cysteine 154 each contribute to the Zn(2+) site. The CTCHY-type zinc finger occupies 98-162 (MGKYFCSKCK…QCVEGAMHHN (65 aa)). Residues 163-206 (CPVCFEYLFDSTRDITVLRCGHTMHLECTKDMGLHNRYTCPVCS) form an RING-type; atypical zinc finger. The residue at position 173 (serine 173) is a Phosphoserine. Threonine 178 is subject to Phosphothreonine. Serine 208 carries the post-translational modification Phosphoserine. The interval 271–291 (QRGSDSHSCSSGMPQVVGSTG) is disordered.

In terms of assembly, interacts with SRK2D/2SNRK2.2, SRK2I/SNRK2.3 and SRK2E/SNRK2.6. In terms of processing, phosphorylated at Ser-173, Thr-178 and Ser-208 by SRK2E/SNRK2.6 in response to abscisic acid (ABA). Phosphorylation activates its E3 ubiquitin-protein ligase activity. Expressed in roots, leaves, and anthers and stigma of open flowers.

The protein resides in the nucleus. Its subcellular location is the cytoplasm. It is found in the endoplasmic reticulum. It catalyses the reaction S-ubiquitinyl-[E2 ubiquitin-conjugating enzyme]-L-cysteine + [acceptor protein]-L-lysine = [E2 ubiquitin-conjugating enzyme]-L-cysteine + N(6)-ubiquitinyl-[acceptor protein]-L-lysine.. It participates in protein modification; protein ubiquitination. Possesses E3 ubiquitin-protein ligase activity in vitro. Mediates mainly 'Lys-48'-linked polyubiquitination. Promotes abscisic acid (ABA)-induced stomatal closure, reactive oxygen species (ROS) production and drought tolerance. Involved in the regulation of stomatal aperture. The protein is E3 ubiquitin-protein ligase RZFP34 of Arabidopsis thaliana (Mouse-ear cress).